A 620-amino-acid polypeptide reads, in one-letter code: Siderophore iron transporter ARN2 (620 aa).

Positions 1 to 42 (MIEVPEDNRSSQTKRKNTEKNCNELMVDEKMDDDSSPRDEMK) are disordered. Basic and acidic residues predominate over residues 16 to 42 (KNTEKNCNELMVDEKMDDDSSPRDEMK). 14 consecutive transmembrane segments (helical) span residues 71 to 93 (IFLF…RGTY), 106 to 128 (LIST…FGGL), 135 to 152 (LTLF…TIIQ), 162 to 184 (AAGA…LMLS), 191 to 213 (WRLF…SGSV), 223 to 245 (WSWN…ILCM), 286 to 308 (VVGV…LAGG), 318 to 335 (IIGP…FIYW), 355 to 377 (VWAP…GYLY), 392 to 414 (TRII…LIVT), 421 to 438 (SYII…GLFY), 448 to 470 (GGII…PTIV), 491 to 513 (VFRI…SLYP), and 561 to 578 (VIVA…TFCV).

It belongs to the major facilitator superfamily.

It localises to the endosome membrane. Its function is as follows. Involved in the transport of siderophore triacestylfusarinine C and so has a role in iron homeostasis. The chain is Siderophore iron transporter ARN2 (ARN2) from Saccharomyces cerevisiae (strain ATCC 204508 / S288c) (Baker's yeast).